The sequence spans 1373 residues: DNA-directed RNA polymerase subunit beta (1373 aa).

This sequence belongs to the RNA polymerase beta chain family. The RNAP catalytic core consists of 2 alpha, 1 beta, 1 beta' and 1 omega subunit. When a sigma factor is associated with the core the holoenzyme is formed, which can initiate transcription.

It carries out the reaction RNA(n) + a ribonucleoside 5'-triphosphate = RNA(n+1) + diphosphate. Functionally, DNA-dependent RNA polymerase catalyzes the transcription of DNA into RNA using the four ribonucleoside triphosphates as substrates. The protein is DNA-directed RNA polymerase subunit beta of Rickettsia conorii (strain ATCC VR-613 / Malish 7).